Consider the following 151-residue polypeptide: Methylated-DNA--protein-cysteine methyltransferase (151 aa).

Cysteine 119 acts as the Nucleophile; methyl group acceptor in catalysis.

Belongs to the MGMT family.

The protein resides in the cytoplasm. The catalysed reaction is a 6-O-methyl-2'-deoxyguanosine in DNA + L-cysteinyl-[protein] = S-methyl-L-cysteinyl-[protein] + a 2'-deoxyguanosine in DNA. It carries out the reaction a 4-O-methyl-thymidine in DNA + L-cysteinyl-[protein] = a thymidine in DNA + S-methyl-L-cysteinyl-[protein]. In terms of biological role, involved in the cellular defense against the biological effects of O6-methylguanine (O6-MeG) and O4-methylthymine (O4-MeT) in DNA. Repairs the methylated nucleobase in DNA by stoichiometrically transferring the methyl group to a cysteine residue in the enzyme. This is a suicide reaction: the enzyme is irreversibly inactivated. This Saccharolobus islandicus (strain Y.N.15.51 / Yellowstone #2) (Sulfolobus islandicus) protein is Methylated-DNA--protein-cysteine methyltransferase.